The sequence spans 92 residues: SPbeta prophage-derived uncharacterized protein YopY (92 aa).

The polypeptide is SPbeta prophage-derived uncharacterized protein YopY (yopY) (Bacillus subtilis (strain 168)).